A 172-amino-acid chain; its full sequence is Endoribonuclease YbeY (172 aa).

A disordered region spans residues M1–R21. Over residues A10 to R21 the composition is skewed to basic and acidic residues. Zn(2+)-binding residues include H134, H138, and H144.

Belongs to the endoribonuclease YbeY family. Zn(2+) is required as a cofactor.

The protein localises to the cytoplasm. Single strand-specific metallo-endoribonuclease involved in late-stage 70S ribosome quality control and in maturation of the 3' terminus of the 16S rRNA. This Burkholderia lata (strain ATCC 17760 / DSM 23089 / LMG 22485 / NCIMB 9086 / R18194 / 383) protein is Endoribonuclease YbeY.